The chain runs to 150 residues: Peptide deformylase (150 aa).

Residues Cys-88 and His-130 each coordinate Fe cation. The active site involves Glu-131. His-134 provides a ligand contact to Fe cation.

The protein belongs to the polypeptide deformylase family. Fe(2+) is required as a cofactor.

It carries out the reaction N-terminal N-formyl-L-methionyl-[peptide] + H2O = N-terminal L-methionyl-[peptide] + formate. Functionally, removes the formyl group from the N-terminal Met of newly synthesized proteins. Requires at least a dipeptide for an efficient rate of reaction. N-terminal L-methionine is a prerequisite for activity but the enzyme has broad specificity at other positions. The protein is Peptide deformylase of Desulfitobacterium hafniense (strain DSM 10664 / DCB-2).